The following is a 378-amino-acid chain: F-box/kelch-repeat protein At4g29370 (378 aa).

The 47-residue stretch at 23–69 folds into the F-box domain; the sequence is TSLFLQLPDEILVNCLARLSKSSYRSLSLVCKTFRSLLHSQPLYSAR. Kelch repeat units lie at residues 124-172, 173-218, 220-259, and 260-305; these read GSKI…VLDD, KIYV…VRKI, VVGG…WSNS, and WCVI…NDNR.

The protein is F-box/kelch-repeat protein At4g29370 of Arabidopsis thaliana (Mouse-ear cress).